Reading from the N-terminus, the 303-residue chain is MAAGPSMWVGSVYLYIKSDTVPLPGKYTHQKALIYEALRSAISESTRGCRDSIEILKIHSSDQQLILYLKFCGLEPCQRFLKDYKECKVQMQIQNKLKNCFSVEGLPIFTELKIDTGEIDSLLEKEEQCLKYISQMKPTIQKDDELAEIDERLKSIKLDSPSALDSELSLQNSCQCSLPLSLHSNRSYHIEGSTFHFQGEEFVDRPLTSAHIQHFAKSVGKNWKPVGRSLGKTCRALNDTAIENLAYEFDRDGRYEQAYQLLRLFKDSEGKKATVQRLVQALEENGLNSIALDLLSLNENGLK.

Residues 141 to 157 carry the Nuclear export signal motif; it reads QKDDELAEIDERLKSIK. In terms of domain architecture, Death spans 208–298; it reads TSAHIQHFAK…SIALDLLSLN (91 aa). The Nuclear localization signal motif lies at 224–237; that stretch reads KPVGRSLGKTCRAL.

Heterodimer with tnfrsf1a.

The protein resides in the nucleus. It localises to the cytoplasm. It is found in the cytoskeleton. Adapter molecule for tnfrsf1a that specifically associates with the cytoplasmic domain of activated tnfrsf1a mediating its interaction with fadd. This Xenopus laevis (African clawed frog) protein is Tumor necrosis factor receptor type 1-associated DEATH domain protein.